Here is a 421-residue protein sequence, read N- to C-terminus: UDP-N-acetylglucosamine 1-carboxyvinyltransferase (421 aa).

22-23 lines the phosphoenolpyruvate pocket; the sequence is KN. Arginine 94 serves as a coordination point for UDP-N-acetyl-alpha-D-glucosamine. The active-site Proton donor is cysteine 118. Cysteine 118 carries the post-translational modification 2-(S-cysteinyl)pyruvic acid O-phosphothioketal. Residues 163 to 166, aspartate 308, and isoleucine 330 each bind UDP-N-acetyl-alpha-D-glucosamine; that span reads KVSV.

This sequence belongs to the EPSP synthase family. MurA subfamily.

Its subcellular location is the cytoplasm. The enzyme catalyses phosphoenolpyruvate + UDP-N-acetyl-alpha-D-glucosamine = UDP-N-acetyl-3-O-(1-carboxyvinyl)-alpha-D-glucosamine + phosphate. It participates in cell wall biogenesis; peptidoglycan biosynthesis. Its function is as follows. Cell wall formation. Adds enolpyruvyl to UDP-N-acetylglucosamine. This is UDP-N-acetylglucosamine 1-carboxyvinyltransferase from Orientia tsutsugamushi (strain Ikeda) (Rickettsia tsutsugamushi).